The primary structure comprises 365 residues: Protein RecA (365 aa).

81–88 contributes to the ATP binding site; that stretch reads GPESSGKT.

Belongs to the RecA family.

Its subcellular location is the cytoplasm. Functionally, can catalyze the hydrolysis of ATP in the presence of single-stranded DNA, the ATP-dependent uptake of single-stranded DNA by duplex DNA, and the ATP-dependent hybridization of homologous single-stranded DNAs. It interacts with LexA causing its activation and leading to its autocatalytic cleavage. This chain is Protein RecA, found in Borreliella afzelii (strain PKo) (Borrelia afzelii).